Reading from the N-terminus, the 344-residue chain is Glycerol-3-phosphate dehydrogenase [NAD(P)+] (344 aa).

NADPH is bound by residues Ser-23, Trp-24, Arg-44, and Lys-118. Sn-glycerol 3-phosphate-binding residues include Lys-118, Gly-147, and Thr-149. An NADPH-binding site is contributed by Ala-151. Sn-glycerol 3-phosphate-binding residues include Lys-202, Asp-255, Ser-265, Arg-266, and Asn-267. The active-site Proton acceptor is the Lys-202. Residue Arg-266 coordinates NADPH. NADPH is bound at residue Glu-292.

Belongs to the NAD-dependent glycerol-3-phosphate dehydrogenase family.

It is found in the cytoplasm. The catalysed reaction is sn-glycerol 3-phosphate + NAD(+) = dihydroxyacetone phosphate + NADH + H(+). It carries out the reaction sn-glycerol 3-phosphate + NADP(+) = dihydroxyacetone phosphate + NADPH + H(+). It functions in the pathway membrane lipid metabolism; glycerophospholipid metabolism. Functionally, catalyzes the reduction of the glycolytic intermediate dihydroxyacetone phosphate (DHAP) to sn-glycerol 3-phosphate (G3P), the key precursor for phospholipid synthesis. The protein is Glycerol-3-phosphate dehydrogenase [NAD(P)+] of Nitrosococcus oceani (strain ATCC 19707 / BCRC 17464 / JCM 30415 / NCIMB 11848 / C-107).